The following is a 118-amino-acid chain: UPF0102 protein lpp3065 (118 aa).

This sequence belongs to the UPF0102 family.

The polypeptide is UPF0102 protein lpp3065 (Legionella pneumophila (strain Paris)).